Consider the following 363-residue polypeptide: DNA replication and repair protein RecF (363 aa).

33 to 40 contributes to the ATP binding site; that stretch reads GDNGQGKT.

The protein belongs to the RecF family.

The protein localises to the cytoplasm. Functionally, the RecF protein is involved in DNA metabolism; it is required for DNA replication and normal SOS inducibility. RecF binds preferentially to single-stranded, linear DNA. It also seems to bind ATP. The sequence is that of DNA replication and repair protein RecF from Tropheryma whipplei (strain TW08/27) (Whipple's bacillus).